Consider the following 204-residue polypeptide: phospholipase A2 inhibitor and Ly6/PLAUR domain-containing protein (204 aa).

The N-terminal stretch at 1 to 26 is a signal peptide; that stretch reads MRLSRRPETFLLAFVLLCTLLGLGCP. A UPAR/Ly6 domain is found at 27 to 117; it reads LHCEICTAAG…NSAFLSVPLT (91 aa). Cystine bridges form between Cys29-Cys53, Cys32-Cys39, Cys46-Cys74, Cys80-Cys101, Cys102-Cys107, Cys126-Cys151, and Cys144-Cys172.

It belongs to the CNF-like-inhibitor family.

It localises to the secreted. The chain is phospholipase A2 inhibitor and Ly6/PLAUR domain-containing protein (PINLYP) from Homo sapiens (Human).